We begin with the raw amino-acid sequence, 217 residues long: Somatotropin (217 aa).

An N-terminal signal peptide occupies residues 1–26 (MMAAGPRTSLLLAFALLCLPWTQVVG). His-46 contacts Zn(2+). An intrachain disulfide couples Cys-79 to Cys-190. Residue Ser-132 is modified to Phosphoserine. Position 199 (Glu-199) interacts with Zn(2+). Cys-207 and Cys-215 are joined by a disulfide.

This sequence belongs to the somatotropin/prolactin family.

Its subcellular location is the secreted. Functionally, plays an important role in growth control. Its major role in stimulating body growth is to stimulate the liver and other tissues to secrete IGF1. It stimulates both the differentiation and proliferation of myoblasts. It also stimulates amino acid uptake and protein synthesis in muscle and other tissues. This chain is Somatotropin (GH1), found in Bos mutus grunniens (Wild yak).